We begin with the raw amino-acid sequence, 562 residues long: Oxygen-dependent choline dehydrogenase (562 aa).

4 to 33 (DYIIIGAGSAGNVLATRLTEDPNTSVLLLE) provides a ligand contact to FAD. His-473 acts as the Proton acceptor in catalysis.

The protein belongs to the GMC oxidoreductase family. The cofactor is FAD.

The protein resides in the cell membrane. It catalyses the reaction choline + A = betaine aldehyde + AH2. The enzyme catalyses betaine aldehyde + NAD(+) + H2O = glycine betaine + NADH + 2 H(+). It functions in the pathway amine and polyamine biosynthesis; betaine biosynthesis via choline pathway; betaine aldehyde from choline (cytochrome c reductase route): step 1/1. Functionally, involved in the biosynthesis of the osmoprotectant glycine betaine. Catalyzes the oxidation of choline to betaine aldehyde and betaine aldehyde to glycine betaine at the same rate. The polypeptide is Oxygen-dependent choline dehydrogenase (Escherichia coli O157:H7).